The primary structure comprises 187 residues: Putative manganese efflux pump MntP (187 aa).

The next 6 membrane-spanning stretches (helical) occupy residues 3-23 (WLTILGISVALAMDAFAVALA), 39-59 (LGFHFGLFQALMPIGGWLLGM), 65-85 (ISAYDHWIAFGLLVFVGGRMV), 103-123 (GMTMVMLSVATSIDAFAVGLS), 124-144 (IAMLGVSVWLPATVIGLVAGV), and 166-186 (ICGGLVLCLIGLKILLEHTLL).

The protein belongs to the MntP (TC 9.B.29) family.

It localises to the cell inner membrane. Its function is as follows. Probably functions as a manganese efflux pump. The sequence is that of Putative manganese efflux pump MntP from Geobacter sp. (strain M21).